A 267-amino-acid polypeptide reads, in one-letter code: Translation initiation factor 2 subunit alpha (267 aa).

The region spanning 12-83 (GEYVIATVKE…RRKTVDVSLK (72 aa)) is the S1 motif domain.

Belongs to the eIF-2-alpha family. As to quaternary structure, heterotrimer composed of an alpha, a beta and a gamma chain.

EIF-2 functions in the early steps of protein synthesis by forming a ternary complex with GTP and initiator tRNA. The polypeptide is Translation initiation factor 2 subunit alpha (Staphylothermus marinus (strain ATCC 43588 / DSM 3639 / JCM 9404 / F1)).